We begin with the raw amino-acid sequence, 330 residues long: Biotin synthase 2 (330 aa).

Residues 48 to 278 form the Radical SAM core domain; the sequence is MCGDGFDMCS…QAAIRLAGGR (231 aa). Residues C66, C70, and C73 each contribute to the [4Fe-4S] cluster site. 4 residues coordinate [2Fe-2S] cluster: S111, C143, C203, and R273.

It belongs to the radical SAM superfamily. Biotin synthase family. As to quaternary structure, homodimer. The cofactor is [4Fe-4S] cluster. Requires [2Fe-2S] cluster as cofactor.

The catalysed reaction is (4R,5S)-dethiobiotin + (sulfur carrier)-SH + 2 reduced [2Fe-2S]-[ferredoxin] + 2 S-adenosyl-L-methionine = (sulfur carrier)-H + biotin + 2 5'-deoxyadenosine + 2 L-methionine + 2 oxidized [2Fe-2S]-[ferredoxin]. It functions in the pathway cofactor biosynthesis; biotin biosynthesis; biotin from 7,8-diaminononanoate: step 2/2. Catalyzes the conversion of dethiobiotin (DTB) to biotin by the insertion of a sulfur atom into dethiobiotin via a radical-based mechanism. The protein is Biotin synthase 2 of Corynebacterium diphtheriae (strain ATCC 700971 / NCTC 13129 / Biotype gravis).